Reading from the N-terminus, the 378-residue chain is Queuine tRNA-ribosyltransferase (378 aa).

Residue Asp89 is the Proton acceptor of the active site. Substrate-binding positions include 89-93, Asp143, Gln187, and Gly214; that span reads DSGGF. An RNA binding region spans residues 245–251; that stretch reads GVGKPED. The active-site Nucleophile is Asp264. The interval 269–273 is RNA binding; important for wobble base 34 recognition; the sequence is TRNAR. Zn(2+) is bound by residues Cys302, Cys304, Cys307, and His333.

The protein belongs to the queuine tRNA-ribosyltransferase family. As to quaternary structure, homodimer. Within each dimer, one monomer is responsible for RNA recognition and catalysis, while the other monomer binds to the replacement base PreQ1. Zn(2+) is required as a cofactor.

The enzyme catalyses 7-aminomethyl-7-carbaguanine + guanosine(34) in tRNA = 7-aminomethyl-7-carbaguanosine(34) in tRNA + guanine. The protein operates within tRNA modification; tRNA-queuosine biosynthesis. Its function is as follows. Catalyzes the base-exchange of a guanine (G) residue with the queuine precursor 7-aminomethyl-7-deazaguanine (PreQ1) at position 34 (anticodon wobble position) in tRNAs with GU(N) anticodons (tRNA-Asp, -Asn, -His and -Tyr). Catalysis occurs through a double-displacement mechanism. The nucleophile active site attacks the C1' of nucleotide 34 to detach the guanine base from the RNA, forming a covalent enzyme-RNA intermediate. The proton acceptor active site deprotonates the incoming PreQ1, allowing a nucleophilic attack on the C1' of the ribose to form the product. After dissociation, two additional enzymatic reactions on the tRNA convert PreQ1 to queuine (Q), resulting in the hypermodified nucleoside queuosine (7-(((4,5-cis-dihydroxy-2-cyclopenten-1-yl)amino)methyl)-7-deazaguanosine). This chain is Queuine tRNA-ribosyltransferase, found in Yersinia enterocolitica serotype O:8 / biotype 1B (strain NCTC 13174 / 8081).